The primary structure comprises 867 residues: Nuclear cap-binding protein subunit 1 (867 aa).

An MIF4G domain is found at 9–228 (LLRIGDRCPE…DLWERIQVLS (220 aa)). Residues 752-797 (SADGDVPNLRAGDPNVNSSARDPEATTMEIDNENGGDNDSQLNGQN) form a disordered region. The segment covering 788–797 (DNDSQLNGQN) has biased composition (polar residues).

This sequence belongs to the NCBP1 family. Component of the nuclear cap-binding complex (CBC), a heterodimer composed of ABH1/CBP80 and CBP20 that interacts with m7GpppG-capped RNA.

The protein resides in the nucleus. The protein localises to the cytoplasm. Its function is as follows. Component of the cap-binding complex (CBC), which binds cotranscriptionally to the 5'-cap of pre-mRNAs and is involved in various processes such as pre-mRNA splicing and RNA-mediated gene silencing (RNAi) by microRNAs (miRNAs). The CBC complex is involved in miRNA-mediated RNA interference and is required for primary miRNA processing. In the CBC complex, ABH1/CBP80 does not bind directly capped RNAs (m7GpppG-capped RNA) but is required to stabilize the movement of the N-terminal loop of CBP20 and lock the CBC into a high affinity cap-binding state with the cap structure. The protein is Nuclear cap-binding protein subunit 1 (ABH1) of Oryza sativa subsp. japonica (Rice).